A 609-amino-acid polypeptide reads, in one-letter code: Glutamine--fructose-6-phosphate aminotransferase [isomerizing] (609 aa).

The active-site Nucleophile; for GATase activity is cysteine 2. In terms of domain architecture, Glutamine amidotransferase type-2 spans 2–218 (CGIVGAIAQR…EGDIAEITRR (217 aa)). SIS domains are found at residues 286-426 (ADEL…LKGL) and 458-599 (LAED…VDQP). The active-site For Fru-6P isomerization activity is lysine 604.

In terms of assembly, homodimer.

It is found in the cytoplasm. It catalyses the reaction D-fructose 6-phosphate + L-glutamine = D-glucosamine 6-phosphate + L-glutamate. In terms of biological role, catalyzes the first step in hexosamine metabolism, converting fructose-6P into glucosamine-6P using glutamine as a nitrogen source. The polypeptide is Glutamine--fructose-6-phosphate aminotransferase [isomerizing] (Escherichia coli O6:H1 (strain CFT073 / ATCC 700928 / UPEC)).